Here is a 270-residue protein sequence, read N- to C-terminus: MRGCRVGQRTGTVGVRVFPVGLCALSLQARDCRGMCGKRLGKVMVLGCMLPGVAARVSLSPKLGVYGDARGGSDLWGICIQAPTMPDTENQAPPRYAPETPLVGLDVAFRAENGFLLQLTVDAALTRLMFCGRCLAGYSFRPGEGSTHLSVAAGFECTALIYDSQHFLSVLGQGLLQPSSSSYSAGNWHRPRSLLGVLTCTAKEVGAIHEESRIKGVCQNYAVPVQLGVQHYFGAHWGIDATATVSFGIDTKLAKFRIPYTLRVGPVFRT.

This sequence to T.pallidum TP_0127, TP_0315 and TP_0618.

This is an uncharacterized protein from Treponema pallidum (strain Nichols).